The following is a 37-amino-acid chain: Large ribosomal subunit protein bL36 (37 aa).

The protein belongs to the bacterial ribosomal protein bL36 family.

This chain is Large ribosomal subunit protein bL36, found in Paracidovorax citrulli (strain AAC00-1) (Acidovorax citrulli).